We begin with the raw amino-acid sequence, 115 residues long: Protamine-2 (115 aa).

Residues 1–115 (MVRCHVKSPT…RRRRRCGRQL (115 aa)) form a disordered region. At Ser8 the chain carries Phosphoserine. The span at 24–38 (ETEHPDQARELRPED) shows a compositional bias: basic and acidic residues. Basic residues-rich tracts occupy residues 44-79 (RTHR…RRRG) and 102-115 (RRMR…GRQL).

It belongs to the protamine P2 family. Interacts with TDRP. Post-translationally, proteolytic processing into mature chains is required for histone eviction during spermatogenesis. Transition proteins (TNP1 and TNP2) are required for processing. In terms of tissue distribution, testis.

It localises to the nucleus. The protein localises to the chromosome. Functionally, protamines substitute for histones in the chromatin of sperm during the haploid phase of spermatogenesis. They compact sperm DNA into a highly condensed, stable and inactive complex. The chain is Protamine-2 (PRM2) from Bos taurus (Bovine).